The chain runs to 109 residues: Keratin, type II microfibrillar (109 aa).

The tract at residues 1–10 is linker 1; it reads QNRQCCESNL. The IF rod domain occupies 1-109; that stretch reads QNRQCCESNL…RLYEEEIRVL (109 aa). The interval 11-109 is coil 1B; it reads EPLFSGYIET…RLYEEEIRVL (99 aa).

The protein belongs to the intermediate filament family.

Wool microfibrillar keratin. In Ovis aries (Sheep), this protein is Keratin, type II microfibrillar.